Reading from the N-terminus, the 436-residue chain is 3-ketoacyl-CoA thiolase (436 aa).

The active-site Acyl-thioester intermediate is the Cys99. Residues His392 and Cys422 each act as proton acceptor in the active site.

The protein belongs to the thiolase-like superfamily. Thiolase family. Heterotetramer of two alpha chains (FadJ) and two beta chains (FadI).

The protein localises to the cytoplasm. It carries out the reaction an acyl-CoA + acetyl-CoA = a 3-oxoacyl-CoA + CoA. Its pathway is lipid metabolism; fatty acid beta-oxidation. In terms of biological role, catalyzes the final step of fatty acid oxidation in which acetyl-CoA is released and the CoA ester of a fatty acid two carbons shorter is formed. The protein is 3-ketoacyl-CoA thiolase of Salmonella dublin (strain CT_02021853).